The sequence spans 264 residues: Phosphonates import ATP-binding protein PhnC (264 aa).

The region spanning 8–255 (LQAENLRMTF…KLIEIYGPEF (248 aa)) is the ABC transporter domain. 40 to 47 (GPSGSGKS) contributes to the ATP binding site.

It belongs to the ABC transporter superfamily. Phosphonates importer (TC 3.A.1.9.1) family. In terms of assembly, the complex is composed of two ATP-binding proteins (PhnC), two transmembrane proteins (PhnE) and a solute-binding protein (PhnD).

It localises to the cell inner membrane. It catalyses the reaction phosphonate(out) + ATP + H2O = phosphonate(in) + ADP + phosphate + H(+). Its function is as follows. Part of the ABC transporter complex PhnCDE involved in phosphonates import. Responsible for energy coupling to the transport system. The chain is Phosphonates import ATP-binding protein PhnC from Maricaulis maris (strain MCS10) (Caulobacter maris).